The chain runs to 428 residues: Histidine--tRNA ligase (428 aa).

This sequence belongs to the class-II aminoacyl-tRNA synthetase family. In terms of assembly, homodimer.

It is found in the cytoplasm. It carries out the reaction tRNA(His) + L-histidine + ATP = L-histidyl-tRNA(His) + AMP + diphosphate + H(+). This Buchnera aphidicola subsp. Schizaphis graminum (strain Sg) protein is Histidine--tRNA ligase.